Reading from the N-terminus, the 876-residue chain is Phosphoenolpyruvate carboxylase (876 aa).

Active-site residues include His138 and Lys543.

It belongs to the PEPCase type 1 family. The cofactor is Mg(2+).

The enzyme catalyses oxaloacetate + phosphate = phosphoenolpyruvate + hydrogencarbonate. Forms oxaloacetate, a four-carbon dicarboxylic acid source for the tricarboxylic acid cycle. The sequence is that of Phosphoenolpyruvate carboxylase from Pseudomonas fluorescens (strain Pf0-1).